The chain runs to 207 residues: Fibroblast growth factor 18 (207 aa).

Residues 1-27 (MYSAPSACTCLCLHFLLLCFQVQVLAA) form the signal peptide. N-linked (GlcNAc...) asparagine glycosylation occurs at Asn-39. A disulfide bond links Cys-109 and Cys-127. Residue Asn-137 is glycosylated (N-linked (GlcNAc...) asparagine).

The protein belongs to the heparin-binding growth factors family. As to quaternary structure, interacts with FGFR3 and FGFR4.

It is found in the secreted. Functionally, plays an important role in the regulation of cell proliferation, cell differentiation and cell migration. Required for normal ossification and bone development. Stimulates hepatic and intestinal proliferation. This is Fibroblast growth factor 18 (Fgf18) from Mus musculus (Mouse).